A 181-amino-acid polypeptide reads, in one-letter code: Oleosin (181 aa).

A disordered region spans residues 1-28; sequence TTTTYDRHFTTTQPHYRQDDRSRYDQQT. Positions 1 to 38 are polar; it reads TTTTYDRHFTTTQPHYRQDDRSRYDQQTHSQSTSRTLA. The segment covering 16–26 has biased composition (basic and acidic residues); sequence YRQDDRSRYDQ. A run of 3 helical transmembrane segments spans residues 38–58, 69–89, and 90–110; these read AIIALLPVGGILLGLAALTFI, PLFVIFSPIIVPAVLTIGLAV, and TGFLASGTFGLTGLSSLSYLF. A hydrophobic region spans residues 39–110; it reads IIALLPVGGI…TGLSSLSYLF (72 aa). Residues 155–181 are disordered; it reads EMGDQGQVGVHAQVGGGKEGRKSGDRT. Positions 158–167 are enriched in low complexity; the sequence is DQGQVGVHAQ. Residues 172-181 are compositionally biased toward basic and acidic residues; that stretch reads KEGRKSGDRT.

This sequence belongs to the oleosin family.

It localises to the lipid droplet. The protein localises to the membrane. Functionally, may have a structural role to stabilize the lipid body during desiccation of the seed by preventing coalescence of the oil. Probably interacts with both lipid and phospholipid moieties of lipid bodies. May also provide recognition signals for specific lipase anchorage in lipolysis during seedling growth. This is Oleosin from Helianthus annuus (Common sunflower).